Reading from the N-terminus, the 262-residue chain is ATP synthase subunit a (262 aa).

The next 7 helical transmembrane spans lie at 30–50, 64–84, 91–111, 123–143, 149–169, 195–215, and 220–240; these read ITSLTNIAILFIIGLLVLTIF, WNIVLETWVASILGIVKDQIG, LIYFPLIFTFFSFVFISNILG, ISVTLGLSIAIMIGVTLIGFS, FFSLFVPKGTPLALVPLLVLI, LFGVISALSVSACIAVSSLLL, and ITLPLAVLVVLYGLELLVALL.

It belongs to the ATPase A chain family. F-type ATPases have 2 components, CF(1) - the catalytic core - and CF(0) - the membrane proton channel. CF(1) has five subunits: alpha(3), beta(3), gamma(1), delta(1), epsilon(1). CF(0) has three main subunits: a, b and c.

Its subcellular location is the mitochondrion inner membrane. In terms of biological role, mitochondrial membrane ATP synthase (F(1)F(0) ATP synthase or Complex V) produces ATP from ADP in the presence of a proton gradient across the membrane which is generated by electron transport complexes of the respiratory chain. F-type ATPases consist of two structural domains, F(1) - containing the extramembraneous catalytic core and F(0) - containing the membrane proton channel, linked together by a central stalk and a peripheral stalk. During catalysis, ATP synthesis in the catalytic domain of F(1) is coupled via a rotary mechanism of the central stalk subunits to proton translocation. Key component of the proton channel; it may play a direct role in the translocation of protons across the membrane. This is ATP synthase subunit a (ATP6) from Allomyces macrogynus.